The primary structure comprises 262 residues: tRNA pseudouridine synthase A (262 aa).

The active-site Nucleophile is Asp51. Tyr109 serves as a coordination point for substrate.

This sequence belongs to the tRNA pseudouridine synthase TruA family. In terms of assembly, homodimer.

It catalyses the reaction uridine(38/39/40) in tRNA = pseudouridine(38/39/40) in tRNA. Formation of pseudouridine at positions 38, 39 and 40 in the anticodon stem and loop of transfer RNAs. The sequence is that of tRNA pseudouridine synthase A from Dechloromonas aromatica (strain RCB).